Consider the following 502-residue polypeptide: Lysine--tRNA ligase (502 aa).

The Mg(2+) site is built by glutamate 411 and glutamate 418.

The protein belongs to the class-II aminoacyl-tRNA synthetase family. Homodimer. It depends on Mg(2+) as a cofactor.

The protein resides in the cytoplasm. It carries out the reaction tRNA(Lys) + L-lysine + ATP = L-lysyl-tRNA(Lys) + AMP + diphosphate. This Clostridium kluyveri (strain ATCC 8527 / DSM 555 / NBRC 12016 / NCIMB 10680 / K1) protein is Lysine--tRNA ligase.